Consider the following 381-residue polypeptide: Homoserine O-succinyltransferase (381 aa).

Positions Asn-45–Asp-360 constitute an AB hydrolase-1 domain. Ser-151 serves as the catalytic Nucleophile. Substrate is bound at residue Arg-221. Residues Asp-321 and His-354 contribute to the active site. Asp-355 lines the substrate pocket.

The protein belongs to the AB hydrolase superfamily. MetX family. In terms of assembly, homodimer.

It is found in the cytoplasm. The enzyme catalyses L-homoserine + succinyl-CoA = O-succinyl-L-homoserine + CoA. It participates in amino-acid biosynthesis; L-methionine biosynthesis via de novo pathway; O-succinyl-L-homoserine from L-homoserine: step 1/1. In terms of biological role, transfers a succinyl group from succinyl-CoA to L-homoserine, forming succinyl-L-homoserine. The chain is Homoserine O-succinyltransferase from Burkholderia multivorans (strain ATCC 17616 / 249).